The following is an 887-amino-acid chain: PAN2-PAN3 deadenylation complex subunit Pan3 (887 aa).

Residues G49–P77 form a C3H1-type zinc finger. Disordered regions lie at residues G111–G139, E280–S307, and P321–I393. The segment at M147–S498 is necessary and sufficient for interaction with PABPC1 but not needed for interaction with PAN2. Polar residues-rich tracts occupy residues N281 to A290 and G298 to S307. The PABPC-interacting motif-2 (PAM-2) motif lies at Q284–S299. A phosphoserine mark is found at S354 and S361. Residues Q463 to G750 form a pseudokinase domain region. ATP is bound by residues R521, D570–T577, and T644–K645. The interval T789–L887 is knob domain.

This sequence belongs to the protein kinase superfamily. PAN3 family. Homodimer. Forms a heterotrimer with a catalytic subunit PAN2 to form the poly(A)-nuclease (PAN) deadenylation complex. Interacts (via PAM-2 motif) with poly(A)-binding protein PABPC1 (via PABC domain), conferring substrate specificity of the enzyme complex. Interacts with the GW182 family proteins TNRC6A, TNRC6B and TNRC6C. Interacts with YTHDF3. As to quaternary structure, interacts with PAN2. Interacts (via N-terminus) with PABPC1 at lower efficiency than isoform 3. In terms of assembly, interacts with PAN2. Interacts (via N-terminus) with PABPC1 at higher efficiency than isoform 1.

Its subcellular location is the cytoplasm. The protein localises to the P-body. It localises to the nucleus. Its function is as follows. Regulatory subunit of the poly(A)-nuclease (PAN) deadenylation complex, one of two cytoplasmic mRNA deadenylases involved in general and miRNA-mediated mRNA turnover. PAN specifically shortens poly(A) tails of RNA and the activity is stimulated by poly(A)-binding protein (PABP). PAN deadenylation is followed by rapid degradation of the shortened mRNA tails by the CCR4-NOT complex. Deadenylated mRNAs are then degraded by two alternative mechanisms, namely exosome-mediated 3'-5' exonucleolytic degradation, or deadenylation-dependent mRNA decapping and subsequent 5'-3' exonucleolytic degradation by XRN1. PAN3 acts as a regulator for PAN activity, recruiting the catalytic subunit PAN2 to mRNA via its interaction with RNA and PABP, and to miRNA targets via its interaction with GW182 family proteins. Decreases PAN2-mediated deadenylation, possibly by preventing progression into the second CCR4-NOT mediated stage of biphasic deadenylation. Has a significant effect on mRNA stability, generally stabilizing a subset of the transcriptome. Stabilizes mRNAs degraded by the AU-rich element (ARE)-mediated mRNA decay pathway but promotes degradation of mRNAs by the microRNA-mediated pathway. Its activity influences mRNP remodeling, specifically reducing formation of a subset of P-bodies containing GW220, an isoform of TNRC6A. Functionally, enhances PAN2 deadenylase activity and has an extensive effect on mRNA stability, generally enhancing mRNA decay across the transcriptome by multiple pathways, including the AU-rich element (ARE)-mediated pathway, microRNA-mediated pathway and the nonsense-mediated pathway (NMD). Its activity is required for efficient P-body formation. May be involved in regulating mRNAs of genes involved in cell cycle progression and cell proliferation. This is PAN2-PAN3 deadenylation complex subunit Pan3 from Mus musculus (Mouse).